We begin with the raw amino-acid sequence, 137 residues long: MYCTHLMTLQLVVMAMLWVTPVRAGTECRYGCRLNNMTIIVEREDCHGSITITTCAGLCETTDLNYQSTWLPRSQGVCNFKEWSYEKVYLEGCPSGVEPFFIPVAKSCDCIKCKTDNTDCDRISMATPSCIVNPLEM.

Residues 1 to 24 (MYCTHLMTLQLVVMAMLWVTPVRA) form the signal peptide. Intrachain disulfides connect C32–C78, C46–C93, C55–C108, C59–C110, and C113–C120. An N-linked (GlcNAc...) asparagine glycan is attached at N36.

This sequence belongs to the glycoprotein hormones subunit beta family. As to quaternary structure, heterodimer of an alpha and a beta chain.

It is found in the secreted. Involved in gametogenesis and steroidogenesis. This is Gonadotropin subunit beta-1 (cgba) from Oncorhynchus keta (Chum salmon).